Reading from the N-terminus, the 431-residue chain is Glucose-1-phosphate adenylyltransferase (431 aa).

Alpha-D-glucose 1-phosphate-binding positions include Tyr-108, Gly-174, 189–190, and Ser-207; that span reads EK.

Belongs to the bacterial/plant glucose-1-phosphate adenylyltransferase family. As to quaternary structure, homotetramer.

The enzyme catalyses alpha-D-glucose 1-phosphate + ATP + H(+) = ADP-alpha-D-glucose + diphosphate. It functions in the pathway glycan biosynthesis; glycogen biosynthesis. Involved in the biosynthesis of ADP-glucose, a building block required for the elongation reactions to produce glycogen. Catalyzes the reaction between ATP and alpha-D-glucose 1-phosphate (G1P) to produce pyrophosphate and ADP-Glc. In Actinobacillus succinogenes (strain ATCC 55618 / DSM 22257 / CCUG 43843 / 130Z), this protein is Glucose-1-phosphate adenylyltransferase.